We begin with the raw amino-acid sequence, 470 residues long: MNAATKLPGELGPIHFVGIGGIGMSGIAEVLMTLGYRVQGSDAKASKITERLVSLGATFFEGQRAGNLGEAAVVVISSAIKKGNPELEEARLRGLPVVRRAEMLAELMRMRSNIAIAGTHGKTTTTTMVATLLDKGGFDPTVINGGVIHAYGSNARAGAGEWMVVEADESDGSFNRLPATIAIVTNIDPEHMEHWGSFDALRKGFYDFVTNIPFYGLAVCCTDHAEVQALVGRVTDRRIVTFGFNAQADVRAINLRYENGIAHFDVALQSEGTGHVIEGMSLPMPGDHNVSNALAAVAVARHLGMKKDEIREALAAFGGVNRRFTKVGEVGGVTIIDDYGHHPVEIAAVLKAARQAVKGRVIAVHQPHRYSRLHSLFDDFCTCFNEADVVAIAEVYAAGEDPIPGAGRDDLVAGLIAHGHRHARAILCEDDLERLVREQARPGDMVVCLGAGTISAWANNLPARLMGKAA.

118–124 lines the ATP pocket; sequence GTHGKTT.

The protein belongs to the MurCDEF family.

Its subcellular location is the cytoplasm. It catalyses the reaction UDP-N-acetyl-alpha-D-muramate + L-alanine + ATP = UDP-N-acetyl-alpha-D-muramoyl-L-alanine + ADP + phosphate + H(+). Its pathway is cell wall biogenesis; peptidoglycan biosynthesis. Cell wall formation. This is UDP-N-acetylmuramate--L-alanine ligase from Cereibacter sphaeroides (strain KD131 / KCTC 12085) (Rhodobacter sphaeroides).